Consider the following 411-residue polypeptide: Glutamate dehydrogenase 3, mitochondrial (411 aa).

The transit peptide at 1 to 18 (MNALAATSRNFRQAARLL) directs the protein to the mitochondrion. The active site involves Lys-102.

This sequence belongs to the Glu/Leu/Phe/Val dehydrogenases family. In terms of tissue distribution, barely expressed in leaves, spikelets and roots. Glumes and stamens specific accumulation.

It localises to the mitochondrion. It catalyses the reaction L-glutamate + NAD(+) + H2O = 2-oxoglutarate + NH4(+) + NADH + H(+). The enzyme catalyses L-glutamate + NADP(+) + H2O = 2-oxoglutarate + NH4(+) + NADPH + H(+). The polypeptide is Glutamate dehydrogenase 3, mitochondrial (GDH3) (Oryza sativa subsp. japonica (Rice)).